An 853-amino-acid polypeptide reads, in one-letter code: Penicillin-binding protein 1A (853 aa).

Residues 1 to 6 (MRIAKL) are Cytoplasmic-facing. Residues 7-27 (ILNTLLTLCILGLVAGGMLYF) form a helical; Signal-anchor for type II membrane protein membrane-spanning segment. At 28 to 853 (HLKSELQQPM…TPATQPQELF (826 aa)) the chain is on the periplasmic side. Residues 37 to 205 (MQIYTADGKL…STMNPLYSLK (169 aa)) form a transglycosylase region. The active-site Proton donor; for transglycosylase activity is E75. The transpeptidase stretch occupies residues 387-681 (QRANGEWQLG…RVISGELAFL (295 aa)). Catalysis depends on S441, which acts as the Acyl-ester intermediate; for transpeptidase activity. The disordered stretch occupies residues 615–636 (NALKPTDDSTNGEELDQQPETV).

It in the N-terminal section; belongs to the glycosyltransferase 51 family. In the C-terminal section; belongs to the transpeptidase family.

The protein localises to the cell inner membrane. It carries out the reaction [GlcNAc-(1-&gt;4)-Mur2Ac(oyl-L-Ala-gamma-D-Glu-L-Lys-D-Ala-D-Ala)](n)-di-trans,octa-cis-undecaprenyl diphosphate + beta-D-GlcNAc-(1-&gt;4)-Mur2Ac(oyl-L-Ala-gamma-D-Glu-L-Lys-D-Ala-D-Ala)-di-trans,octa-cis-undecaprenyl diphosphate = [GlcNAc-(1-&gt;4)-Mur2Ac(oyl-L-Ala-gamma-D-Glu-L-Lys-D-Ala-D-Ala)](n+1)-di-trans,octa-cis-undecaprenyl diphosphate + di-trans,octa-cis-undecaprenyl diphosphate + H(+). The enzyme catalyses Preferential cleavage: (Ac)2-L-Lys-D-Ala-|-D-Ala. Also transpeptidation of peptidyl-alanyl moieties that are N-acyl substituents of D-alanine.. It functions in the pathway cell wall biogenesis; peptidoglycan biosynthesis. Functionally, cell wall formation. Synthesis of cross-linked peptidoglycan from the lipid intermediates. The enzyme has a penicillin-insensitive transglycosylase N-terminal domain (formation of linear glycan strands) and a penicillin-sensitive transpeptidase C-terminal domain (cross-linking of the peptide subunits). This is Penicillin-binding protein 1A (mrcA) from Haemophilus influenzae (strain ATCC 51907 / DSM 11121 / KW20 / Rd).